Consider the following 249-residue polypeptide: 5'-nucleotidase SurE (249 aa).

Residues D8, D9, S39, and N91 each contribute to the a divalent metal cation site.

The protein belongs to the SurE nucleotidase family. Requires a divalent metal cation as cofactor.

It localises to the cytoplasm. The enzyme catalyses a ribonucleoside 5'-phosphate + H2O = a ribonucleoside + phosphate. Functionally, nucleotidase that shows phosphatase activity on nucleoside 5'-monophosphates. The sequence is that of 5'-nucleotidase SurE from Pseudomonas putida (strain W619).